The chain runs to 569 residues: Proline--tRNA ligase (569 aa).

This sequence belongs to the class-II aminoacyl-tRNA synthetase family. ProS type 1 subfamily. As to quaternary structure, homodimer.

It localises to the cytoplasm. The enzyme catalyses tRNA(Pro) + L-proline + ATP = L-prolyl-tRNA(Pro) + AMP + diphosphate. Its function is as follows. Catalyzes the attachment of proline to tRNA(Pro) in a two-step reaction: proline is first activated by ATP to form Pro-AMP and then transferred to the acceptor end of tRNA(Pro). As ProRS can inadvertently accommodate and process non-cognate amino acids such as alanine and cysteine, to avoid such errors it has two additional distinct editing activities against alanine. One activity is designated as 'pretransfer' editing and involves the tRNA(Pro)-independent hydrolysis of activated Ala-AMP. The other activity is designated 'posttransfer' editing and involves deacylation of mischarged Ala-tRNA(Pro). The misacylated Cys-tRNA(Pro) is not edited by ProRS. This Lactiplantibacillus plantarum (strain ATCC BAA-793 / NCIMB 8826 / WCFS1) (Lactobacillus plantarum) protein is Proline--tRNA ligase.